Consider the following 715-residue polypeptide: Metastasis-associated protein MTA1 (715 aa).

The BAH domain maps to 1 to 164 (MAANMYRVGD…PQQKTLLADK (164 aa)). Positions 165 to 276 (GEIRVGNRYQ…KAISALVPQG (112 aa)) constitute an ELM2 domain. A Glycyl lysine isopeptide (Lys-Gly) (interchain with G-Cter in ubiquitin) cross-link involves residue K182. Residues 283 to 335 (DEMEEWSASEANLFEEALEKYGKDFTDIQQDFLPWKSLTSIIEYYYMWKTTDR) enclose the SANT domain. S386 is subject to Phosphoserine. The GATA-type; atypical zinc-finger motif lies at 393–420 (CESCYTTQSYQWYSWGPPNMQCRLCASC). The disordered stretch occupies residues 435–460 (RLDGERPGPNRSNMSPHGLPARSSGS). A phosphoserine mark is found at S446 and S449. A Glycyl lysine isopeptide (Lys-Gly) (interchain with G-Cter in SUMO2 and SUMO3) cross-link involves residue K509. S522 carries the post-translational modification Phosphoserine. The SH3-binding motif lies at 545 to 552 (PRPPKPDP). K549 is covalently cross-linked (Glycyl lysine isopeptide (Lys-Gly) (interchain with G-Cter in SUMO2)). T564 carries the phosphothreonine modification. A Phosphoserine modification is found at S576. At T578 the chain carries Phosphothreonine. An N6-acetyllysine; alternate modification is found at K626. A Glycyl lysine isopeptide (Lys-Gly) (interchain with G-Cter in ubiquitin); alternate cross-link involves residue K626. At S639 the chain carries Phosphoserine. An interaction with RBBP4 region spans residues 656–686 (DVFYMATEETRKIRKLLSSSETKRAARRPYK). The disordered stretch occupies residues 673–715 (SSSETKRAARRPYKPIALRQSQALPPRPPPPAPVNDEPIVIED). The short motif at 696 to 705 (LPPRPPPPAP) is the SH3-binding element. The SUMO interaction motif 1 (SIM); crucial for efficient sumoylation motif lies at 711–715 (IVIED).

It belongs to the metastasis-associated protein family. Component of the nucleosome remodeling and deacetylase (NuRD) repressor complex, composed of core proteins MTA1, MTA2, MTA3, RBBP4, RBBP7, HDAC1, HDAC2, MBD2, MBD3, and peripherally associated proteins CDK2AP1, CDK2AP2, GATAD2A, GATAD2B, CHD3, CHD4 and CHD5. The exact stoichiometry of the NuRD complex is unknown, and some subunits such as MBD2 and MBD3, GATAD2A and GATAD2B, and CHD3, CHD4 and CHD5 define mutually exclusive NuRD complexes. Interacts with RBBP4; the interaction is direct. Interacts with BMAL1. Interacts with CLOCK. Interacts with COP1. Interacts with CSNK1G2 in the cytoplasm. Interacts with EP300. Interacts with HDAC2. Interacts with IFI16. Interacts with ITGB3BP/CENPR. Interacts with MBD3L2. Interacts with MDM2. Interacts with NACC2. Interacts with p53/TP53. Interacts with PIAS1. Interacts with PIAS3. Interacts with PIAS4. Interacts with PWWP2A. Interacts with PWWP2B. Interacts with SENP1. Interacts with SENP2. Interacts with SIX3; facilitates the binding of SIX3 to the core DNA motif of SIX3 promoter. Interacts with SUMO1. Interacts with SUMO2. Interacts with TFCP2L1; which is indispensable for TFCP2L1-mediated self-renewal-promoting effect and endoderm-inhibiting action. Interacts with TFAP2C. Interacts with TPR. Interacts with UBE2I/UBC9. Phosphorylation by CSNK1G2/CK1 triggered by estrogen enhances corepression of estrogen receptor (ER). Post-translationally, acetylation is essential for its transcriptional coactivator activity. In terms of processing, sumoylation positively regulates its transcriptional corepressor activity but does not affect the protein stability. Sumoylated preferentially by SUMO2 or SUMO3 than SUMO1. Sumoylation is enhanced by PIAS1/3/4 and preferentially sumoylated by SUMO2 in the presence of PIAS1/3/4. Desumoylated by SENP1. Ubiquitinated by COP1, which leads to proteasomal degradation. In terms of tissue distribution, widely expressed. High expression in brain, liver, kidney, and cardiac muscle, ovaries, adrenal glands and virgin mammary glands. Higher in tumors than in adjacent normal tissue from the same individual. Up-regulated in a wide variety of cancers including breast, liver, ovarian, and colorectal cancer and its expression levels are closely correlated with tumor aggressiveness and metastasis.

It localises to the nucleus. The protein localises to the cytoplasm. The protein resides in the nucleus envelope. Its subcellular location is the cytoskeleton. Transcriptional coregulator which can act as both a transcriptional corepressor and coactivator. Acts as a component of the histone deacetylase NuRD complex which participates in the remodeling of chromatin. In the NuRD complex, regulates transcription of its targets by modifying the acetylation status of the target chromatin and cofactor accessibility to the target DNA. In conjunction with other components of NuRD, acts as a transcriptional corepressor of BRCA1, ESR1, TFF1 and CDKN1A. Acts as a transcriptional coactivator of BCAS3, and SUMO2, independent of the NuRD complex. Stimulates the expression of WNT1 by inhibiting the expression of its transcriptional corepressor SIX3. Regulates p53-dependent and -independent DNA repair processes following genotoxic stress. Regulates the stability and function of p53/TP53 by inhibiting its ubiquitination by COP1 and MDM2 thereby regulating the p53-dependent DNA repair. Plays a role in the regulation of the circadian clock and is essential for the generation and maintenance of circadian rhythms under constant light and for normal entrainment of behavior to light-dark (LD) cycles. Positively regulates the CLOCK-BMAL1 heterodimer mediated transcriptional activation of its own transcription and the transcription of CRY1. Regulates deacetylation of BMAL1 by regulating SIRT1 expression, resulting in derepressing CRY1-mediated transcription repression. With TFCP2L1, promotes establishment and maintenance of pluripotency in embryonic stem cells (ESCs) and inhibits endoderm differentiation. Its function is as follows. Binds to ESR1 and sequesters it in the cytoplasm and enhances its non-genomic responses. The protein is Metastasis-associated protein MTA1 (MTA1) of Homo sapiens (Human).